The sequence spans 415 residues: Imidazolonepropionase (415 aa).

Fe(3+)-binding residues include H76 and H78. Positions 76 and 78 each coordinate Zn(2+). R85, Y148, and H181 together coordinate 4-imidazolone-5-propanoate. An N-formimidoyl-L-glutamate-binding site is contributed by Y148. Residue H246 coordinates Fe(3+). H246 contributes to the Zn(2+) binding site. Residue E249 coordinates 4-imidazolone-5-propanoate. D320 contacts Fe(3+). D320 contacts Zn(2+). N-formimidoyl-L-glutamate-binding residues include N322 and G324. T325 serves as a coordination point for 4-imidazolone-5-propanoate.

Belongs to the metallo-dependent hydrolases superfamily. HutI family. The cofactor is Zn(2+). Fe(3+) serves as cofactor.

The protein localises to the cytoplasm. It catalyses the reaction 4-imidazolone-5-propanoate + H2O = N-formimidoyl-L-glutamate. It participates in amino-acid degradation; L-histidine degradation into L-glutamate; N-formimidoyl-L-glutamate from L-histidine: step 3/3. In terms of biological role, catalyzes the hydrolytic cleavage of the carbon-nitrogen bond in imidazolone-5-propanoate to yield N-formimidoyl-L-glutamate. It is the third step in the universal histidine degradation pathway. The chain is Imidazolonepropionase from Thermoanaerobacter pseudethanolicus (strain ATCC 33223 / 39E) (Clostridium thermohydrosulfuricum).